A 623-amino-acid chain; its full sequence is Leucine-rich repeat, immunoglobulin-like domain and transmembrane domain-containing protein 1 (623 aa).

The signal sequence occupies residues Met-1–Ser-21. In terms of domain architecture, LRRNT spans Phe-22 to Pro-59. Residues Phe-22 to Arg-526 are Lumenal-facing. 5 LRR repeats span residues Asp-60–Pro-81, Arg-84–Gly-105, Arg-108–Lys-128, Gln-132–Phe-153, and Asn-156–Thr-177. Asn-156 carries an N-linked (GlcNAc...) asparagine glycan. Positions Asn-201 to Ser-253 constitute an LRRCT domain. In terms of domain architecture, Ig-like C2-type spans Pro-266–Asn-332. Cys-275 and Cys-328 are oxidised to a cystine. N-linked (GlcNAc...) asparagine glycans are attached at residues Asn-296 and Asn-455. The region spanning Met-430 to Val-518 is the Fibronectin type-III domain. An LRR 6 repeat occupies Gln-525–Cys-548. The helical transmembrane segment at Leu-527–Val-547 threads the bilayer. Residues Cys-548–Cys-623 lie on the Cytoplasmic side of the membrane.

As to quaternary structure, homodimer. Interacts with LRIT2; may form a heterodimer with LRIT2. Interacts (via its N-terminal extracellular domain) with metabotropic glutamate receptor GRM6. Interacts (via its extreme C-terminus) with the scaffold protein FRMPD2 (via the third PDZ domain); the interaction leads to their colocalization in photoreceptor synapses. In terms of tissue distribution, retina, outer segments of photoreceptor cells.

Its subcellular location is the endoplasmic reticulum membrane. The protein resides in the cell projection. It is found in the dendrite. Photoreceptor synaptic protein essential for normal vision. Involved in synapse formation in cone photoreceptor cells. This chain is Leucine-rich repeat, immunoglobulin-like domain and transmembrane domain-containing protein 1 (Lrit1), found in Rattus norvegicus (Rat).